The following is a 207-amino-acid chain: Large ribosomal subunit protein uL4 (207 aa).

The interval alanine 50–glycine 76 is disordered.

This sequence belongs to the universal ribosomal protein uL4 family. In terms of assembly, part of the 50S ribosomal subunit.

In terms of biological role, one of the primary rRNA binding proteins, this protein initially binds near the 5'-end of the 23S rRNA. It is important during the early stages of 50S assembly. It makes multiple contacts with different domains of the 23S rRNA in the assembled 50S subunit and ribosome. Functionally, forms part of the polypeptide exit tunnel. In Staphylococcus aureus (strain MRSA252), this protein is Large ribosomal subunit protein uL4.